A 775-amino-acid polypeptide reads, in one-letter code: METRCSLLFLSLILLYLPKPGSGFGSSGPIAASFGGSAFFCAIDASGRQDVICWGKNYSSPSSPSSSSSSSSIASSTSASYNIPSMAVLSGGDGFLCGILSNTSQAFCFSSLGSSSGMDLVPLAYRTTAYSQIAAGNSHVCAVRGAYYSDHDSGTIDCWEITRATNNNSLIAKENPNFYDQIVSNLVFNNIVSGDGFSCGGIRDGGMLCFGPNSSNLGFNTTSDNFQVLAAGKNSVCAILNLSREVKCWGEDESFVNSPMNDSRFVSLTAGPRHFCGIREDNHEVECWGNSNFSLIPKGSGFKAIASSDFIVCGIREEDLVLDCWMVNGSSTLAYDPPLELCSPGMCRAGPCNEKEFAFNASILNEPDLTSLCVRKELMVCSPCGSDCSHGFFLSSSCTANSDRICTPCSLCQNSSCSDICKLHNSNFPDKHWHQLQRLVLIIGSCASALLIIIIGCCVVPRIVTSPNKEDGAANQFKSCIGKPDLDTDQPLENVSPAPSVTPFAQVFRLSELKDATNGFKEFNELGRGSYGFVYKAVLADGRQVAVKRANAATIIHTNTREFETELEILCNIRHCNIVNLLGYSTEMGERLLVYEYMPHGTLHDHLHSGFSPLSWSLRIKIAMQTAKGLEYLHNEAEPRIIHGDVKSSNVLLDSEWVARVADFGLVTSSNEKNLDIKRDVYDFGVVLLEILTGRKRYDRDCDPPEIVEWTVPVIREGKAAAIVDTYIALPRNVEPLLKLADVAELCVREDPNQQPTMSELANWLEHVARDALIF.

An N-terminal signal peptide occupies residues 1–23 (METRCSLLFLSLILLYLPKPGSG). At 24–439 (FGSSGPIAAS…DKHWHQLQRL (416 aa)) the chain is on the extracellular side. N-linked (GlcNAc...) asparagine glycosylation is found at asparagine 57, asparagine 102, asparagine 167, asparagine 213, asparagine 220, asparagine 241, asparagine 261, asparagine 292, asparagine 328, and asparagine 360. One copy of the TNFR-Cys repeat lies at 351 to 406 (PCNEKEFAFNASILNEPDLTSLCVRKELMVCSPCGSDCSHGFFLSSSCTANSDRIC). Cystine bridges form between cysteine 352–cysteine 381, cysteine 384–cysteine 398, and cysteine 388–cysteine 406. The N-linked (GlcNAc...) asparagine glycan is linked to asparagine 414. A helical membrane pass occupies residues 440–460 (VLIIGSCASALLIIIIGCCVV). Residues 461–775 (PRIVTSPNKE…EHVARDALIF (315 aa)) are Cytoplasmic-facing. One can recognise a Protein kinase domain in the interval 520-770 (FKEFNELGRG…LANWLEHVAR (251 aa)). ATP contacts are provided by residues 526–534 (LGRGSYGFV) and lysine 548. The active-site Proton acceptor is the aspartate 645.

Belongs to the protein kinase superfamily. Ser/Thr protein kinase family. Homodimer. As to expression, expressed in roots, leaves, shoot apical meristems (SAM), and floral buds.

It localises to the membrane. The catalysed reaction is L-seryl-[protein] + ATP = O-phospho-L-seryl-[protein] + ADP + H(+). It carries out the reaction L-threonyl-[protein] + ATP = O-phospho-L-threonyl-[protein] + ADP + H(+). In terms of biological role, serine/threonine-protein kinase with low activity. The polypeptide is Serine/threonine-protein kinase-like protein CCR1 (CCR1) (Arabidopsis thaliana (Mouse-ear cress)).